Consider the following 265-residue polypeptide: Exosome complex component Rrp4 (265 aa).

An S1 motif domain is found at 65–137 (GDNVIGKIVD…EVNNIDLTTK (73 aa)). One can recognise a KH domain in the interval 147 to 205 (KGGQIVKITPSRVPRVIGRGGSMINMIKKLTMTRIIVGQNGWIWVSGKNDALEKLAIEA). The interval 241-265 (EIPKLEEEPQGEDEVNGNDGEARGA) is disordered.

It belongs to the RRP4 family. As to quaternary structure, component of the archaeal exosome complex. Forms a trimer of Rrp4 and/or Csl4 subunits. The trimer associates with a hexameric ring-like arrangement composed of 3 Rrp41-Rrp42 heterodimers.

The protein resides in the cytoplasm. Its function is as follows. Non-catalytic component of the exosome, which is a complex involved in RNA degradation. Increases the RNA binding and the efficiency of RNA degradation. Confers strong poly(A) specificity to the exosome. The chain is Exosome complex component Rrp4 from Pyrococcus abyssi (strain GE5 / Orsay).